A 337-amino-acid chain; its full sequence is Dolichyl-phosphate beta-glucosyltransferase ALG5C (337 aa).

Residues 1-6 (MNDLPP) are Lumenal-facing. A helical membrane pass occupies residues 7-27 (IANLISNILFVLLIITFLYAL). Over 28 to 337 (CSRFVSDKTL…ADTPISDFEV (310 aa)) the chain is Cytoplasmic.

The protein belongs to the glycosyltransferase 2 family.

It localises to the endoplasmic reticulum membrane. The catalysed reaction is a di-trans,poly-cis-dolichyl phosphate + UDP-alpha-D-glucose = a di-trans,poly-cis-dolichyl beta-D-glucosyl phosphate + UDP. It participates in protein modification; protein glycosylation. In terms of biological role, dolichyl-phosphate beta-glucosyltransferase involved in the glycosylation of glycoproteins through the synthesis of dolichyl beta-D-glucosyl phosphate which serves as a sugar donor for transfer of three glucose residues to the Man-9-GlcNAc-2-PP-dolichol precursor to N-glycans. The sequence is that of Dolichyl-phosphate beta-glucosyltransferase ALG5C from Trichomonas vaginalis (strain ATCC PRA-98 / G3).